The chain runs to 709 residues: Dual specificity calcium/calmodulin-dependent 3',5'-cyclic nucleotide phosphodiesterase 1C (709 aa).

M1 is subject to N-acetylmethionine. The interval 123–146 (EKPRFKSIVHAVQAGIFVERMYRR) is calmodulin-binding. Residues 151–528 (VGLSYPPAVI…ERWRAKVPKE (378 aa)) form the PDEase domain. H228 acts as the Proton donor in catalysis. Residues H232, H268, D269, and D376 each coordinate Zn(2+). Position 269 (D269) interacts with Mg(2+). Disordered stretches follow at residues 453 to 495 (LIDE…APIN) and 523 to 650 (AKVP…TCRL). Residues 483–495 (VKTSGSEGSAPIN) show a composition bias toward polar residues. Residues 523–556 (AKVPKEEKAKKEAEEKARLAAEEQQKEMEAKSQA) show a composition bias toward basic and acidic residues. The segment covering 571–581 (ETKNQVNGTRA) has biased composition (polar residues). 2 stretches are compositionally biased toward basic and acidic residues: residues 582–598 (NKSD…EKSS) and 606–633 (DFKD…DGTK).

This sequence belongs to the cyclic nucleotide phosphodiesterase family. PDE1 subfamily. As to quaternary structure, homodimer. Zn(2+) serves as cofactor. Requires Mg(2+) as cofactor. In terms of tissue distribution, isoform PDE1C2 is present in the heart and brain and, at lower levels in the lung, liver, kidney and skeletal muscle. Isoform PDE1C1 is expressed in the heart and brain and, at lower levels in lung. Also expressed at low levels in uterus and testis.

The protein localises to the lysosome. The catalysed reaction is a nucleoside 3',5'-cyclic phosphate + H2O = a nucleoside 5'-phosphate + H(+). The enzyme catalyses 3',5'-cyclic GMP + H2O = GMP + H(+). It catalyses the reaction 3',5'-cyclic AMP + H2O = AMP + H(+). Its activity is regulated as follows. Type I PDE are activated by the binding of calmodulin in the presence of Ca(2+). Calmodulin-dependent cyclic nucleotide phosphodiesterase with a dual specificity for the second messengers cAMP and cGMP, which are key regulators of many important physiological processes. Has a high affinity for both cAMP and cGMP. Modulates the amplitude and duration of the cAMP signal in sensory cilia in response to odorant stimulation, hence contributing to the generation of action potentials. Regulates smooth muscle cell proliferation. Regulates the stability of growth factor receptors, including PDGFRB. In Homo sapiens (Human), this protein is Dual specificity calcium/calmodulin-dependent 3',5'-cyclic nucleotide phosphodiesterase 1C.